The chain runs to 477 residues: Protein translocase subunit SecY (477 aa).

10 helical membrane passes run 28–48, 67–89, 130–150, 165–185, 196–216, 234–254, 286–306, 329–349, 387–407, and 413–433; these read FMISFLITVVLLVLFRVLAII, FFSLFNLLGGGGLNQLSLFAVGI, IITLPFALVQSFAVIQIATNS, DFVAFYIIAMTAGTYLSVFLG, GITLLILSGILAQLPEGFIAA, AISFFIYFMAFVTLLFATTFI, SAGVIPVIFASSIMSIPVTIA, GIVLYGILVILFSFFYSYIQI, FIGAPFLTVIAIIPYIVSALI, and LSLGGTGIIIIVTAVVEFMSA.

This sequence belongs to the SecY/SEC61-alpha family. In terms of assembly, component of the Sec protein translocase complex. Heterotrimer consisting of SecY, SecE and SecG subunits. The heterotrimers can form oligomers, although 1 heterotrimer is thought to be able to translocate proteins. Interacts with the ribosome. Interacts with SecDF, and other proteins may be involved. Interacts with SecA.

It is found in the cell membrane. In terms of biological role, the central subunit of the protein translocation channel SecYEG. Consists of two halves formed by TMs 1-5 and 6-10. These two domains form a lateral gate at the front which open onto the bilayer between TMs 2 and 7, and are clamped together by SecE at the back. The channel is closed by both a pore ring composed of hydrophobic SecY resides and a short helix (helix 2A) on the extracellular side of the membrane which forms a plug. The plug probably moves laterally to allow the channel to open. The ring and the pore may move independently. In Mycoplasma pneumoniae (strain ATCC 29342 / M129 / Subtype 1) (Mycoplasmoides pneumoniae), this protein is Protein translocase subunit SecY.